A 493-amino-acid polypeptide reads, in one-letter code: 11S globulin seed storage protein G3 (493 aa).

The N-terminal stretch at 1–20 is a signal peptide; it reads MASKATLLLAFTLLFATCIA. Disulfide bonds link Cys-32-Cys-65 and Cys-103-Cys-312. The Cupin type-1 1 domain maps to 37 to 248; sequence IEALEPIEVI…SFNVDQETAQ (212 aa). Disordered regions lie at residues 190-229 and 269-305; these read PQAQ…NIFN and IVRP…GWSN. Low complexity-rich tracts occupy residues 191–221 and 280–298; these read QAQA…QGQG and RQQQ…QQQG. One can recognise a Cupin type-1 2 domain in the interval 318-467; sequence VNIDNPSQAD…RYQLSREEAQ (150 aa).

This sequence belongs to the 11S seed storage protein (globulins) family. In terms of assembly, hexamer; each subunit is composed of an acidic and a basic chain derived from a single precursor and linked by a disulfide bond.

Its function is as follows. This is a seed storage protein. The sequence is that of 11S globulin seed storage protein G3 (HAG3) from Helianthus annuus (Common sunflower).